The sequence spans 125 residues: MARIAGVDLPSNKRIVIGLTYIFGIGKTSSQNILKKAGIDESIRVKDLSDEHEAAIRRVIEESYQVEGDLRSEVNLNIKRLMDVGCYRGFRHRRGLPVNGQRTRTNARTRKGVKKTVANKKKATK.

The interval 95–125 is disordered; sequence GLPVNGQRTRTNARTRKGVKKTVANKKKATK. The segment covering 105-125 has biased composition (basic residues); the sequence is TNARTRKGVKKTVANKKKATK.

Belongs to the universal ribosomal protein uS13 family. As to quaternary structure, part of the 30S ribosomal subunit. Forms a loose heterodimer with protein S19. Forms two bridges to the 50S subunit in the 70S ribosome.

In terms of biological role, located at the top of the head of the 30S subunit, it contacts several helices of the 16S rRNA. In the 70S ribosome it contacts the 23S rRNA (bridge B1a) and protein L5 of the 50S subunit (bridge B1b), connecting the 2 subunits; these bridges are implicated in subunit movement. Contacts the tRNAs in the A and P-sites. The protein is Small ribosomal subunit protein uS13 of Leptospira biflexa serovar Patoc (strain Patoc 1 / Ames).